The primary structure comprises 334 residues: Cathepsin K (334 aa).

Positions 1–19 (MLRLHWLALLVLLLPMAAA) are cleaved as a signal peptide. The propeptide at 20 to 119 (QLRPEPELDA…TLYVPDWSSR (100 aa)) is activation peptide. An N-linked (GlcNAc...) asparagine glycan is attached at asparagine 108. 3 disulfides stabilise this stretch: cysteine 141–cysteine 182, cysteine 175–cysteine 215, and cysteine 274–cysteine 323. Residue cysteine 144 is part of the active site. Active-site residues include histidine 281 and asparagine 301.

The protein belongs to the peptidase C1 family.

It carries out the reaction Broad proteolytic activity. With small-molecule substrates and inhibitors, the major determinant of specificity is P2, which is preferably Leu, Met &gt; Phe, and not Arg.. Functionally, closely involved in osteoclastic bone resorption and may participate partially in the disorder of bone remodeling. Displays potent endoprotease activity against fibrinogen at acid pH. May play an important role in extracellular matrix degradation. This is Cathepsin K (CTSK) from Gallus gallus (Chicken).